Consider the following 389-residue polypeptide: Probable dual-specificity RNA methyltransferase RlmN (389 aa).

Residue E114 is the Proton acceptor of the active site. Positions 120 to 358 (QHYGLSVCVT…CVVRQEHGTD (239 aa)) constitute a Radical SAM core domain. An intrachain disulfide couples C127 to C363. [4Fe-4S] cluster is bound by residues C134, C138, and C141. Residues 186-187 (GE), S218, 241-243 (SLH), and N319 contribute to the S-adenosyl-L-methionine site. Residue C363 is the S-methylcysteine intermediate of the active site. Positions 370-389 (TMKRDRQKAVAEASGKSEGK) are disordered. Residues 371–389 (MKRDRQKAVAEASGKSEGK) are compositionally biased toward basic and acidic residues.

The protein belongs to the radical SAM superfamily. RlmN family. [4Fe-4S] cluster serves as cofactor.

The protein resides in the cytoplasm. The catalysed reaction is adenosine(2503) in 23S rRNA + 2 reduced [2Fe-2S]-[ferredoxin] + 2 S-adenosyl-L-methionine = 2-methyladenosine(2503) in 23S rRNA + 5'-deoxyadenosine + L-methionine + 2 oxidized [2Fe-2S]-[ferredoxin] + S-adenosyl-L-homocysteine. The enzyme catalyses adenosine(37) in tRNA + 2 reduced [2Fe-2S]-[ferredoxin] + 2 S-adenosyl-L-methionine = 2-methyladenosine(37) in tRNA + 5'-deoxyadenosine + L-methionine + 2 oxidized [2Fe-2S]-[ferredoxin] + S-adenosyl-L-homocysteine. Its function is as follows. Specifically methylates position 2 of adenine 2503 in 23S rRNA and position 2 of adenine 37 in tRNAs. This is Probable dual-specificity RNA methyltransferase RlmN from Streptococcus thermophilus (strain CNRZ 1066).